The primary structure comprises 527 residues: Type-2 serine--tRNA ligase (527 aa).

Position 317 (A317) interacts with L-serine. C319 lines the Zn(2+) pocket. R349 provides a ligand contact to L-serine. Residues 349-351 (RWE) and 360-361 (RV) contribute to the ATP site. 366–368 (RIE) contacts L-serine. Residues E368 and C478 each contribute to the Zn(2+) site. R485 serves as a coordination point for ATP.

It belongs to the class-II aminoacyl-tRNA synthetase family. Type-2 seryl-tRNA synthetase subfamily. Homodimer. Requires Zn(2+) as cofactor.

The protein resides in the cytoplasm. It carries out the reaction tRNA(Ser) + L-serine + ATP = L-seryl-tRNA(Ser) + AMP + diphosphate + H(+). The enzyme catalyses tRNA(Sec) + L-serine + ATP = L-seryl-tRNA(Sec) + AMP + diphosphate + H(+). Its pathway is aminoacyl-tRNA biosynthesis; selenocysteinyl-tRNA(Sec) biosynthesis; L-seryl-tRNA(Sec) from L-serine and tRNA(Sec): step 1/1. Its function is as follows. Catalyzes the attachment of serine to tRNA(Ser). Is also able to aminoacylate tRNA(Sec) with serine, to form the misacylated tRNA L-seryl-tRNA(Sec), which will be further converted into selenocysteinyl-tRNA(Sec). The chain is Type-2 serine--tRNA ligase from Methanopyrus kandleri (strain AV19 / DSM 6324 / JCM 9639 / NBRC 100938).